The following is a 250-amino-acid chain: Isoprenyl transferase (250 aa).

The active site involves D26. Mg(2+) is bound at residue D26. Residues 27-30 (GNGR), W31, R39, H43, and 71-73 (STE) contribute to the substrate site. Residue N74 is the Proton acceptor of the active site. Residues W75, R77, R198, and 204–206 (RLS) each bind substrate. E217 provides a ligand contact to Mg(2+).

This sequence belongs to the UPP synthase family. Homodimer. It depends on Mg(2+) as a cofactor.

Catalyzes the condensation of isopentenyl diphosphate (IPP) with allylic pyrophosphates generating different type of terpenoids. In Streptococcus agalactiae serotype III (strain NEM316), this protein is Isoprenyl transferase.